The sequence spans 208 residues: Flavin-dependent thymidylate synthase (208 aa).

One can recognise a ThyX domain in the interval 1–208; it reads MEVICKHYTP…QYLFEDCLKH (208 aa). FAD-binding positions include serine 50 and 74 to 76; that span reads RHR. DUMP-binding positions include 71-74, 84-86, and lysine 147; these read ELSR and SSR. The ThyX motif signature appears at 74 to 84; the sequence is RHRIASLSVKS. Residues 163-165 and asparagine 169 each bind FAD; that span reads NAR. Residue arginine 174 coordinates dUMP. Arginine 174 functions as the Involved in ionization of N3 of dUMP, leading to its activation in the catalytic mechanism.

It belongs to the thymidylate synthase ThyX family. Homotetramer. FAD serves as cofactor.

It catalyses the reaction dUMP + (6R)-5,10-methylene-5,6,7,8-tetrahydrofolate + NADPH + H(+) = dTMP + (6S)-5,6,7,8-tetrahydrofolate + NADP(+). It functions in the pathway pyrimidine metabolism; dTTP biosynthesis. Catalyzes the reductive methylation of 2'-deoxyuridine-5'-monophosphate (dUMP) to 2'-deoxythymidine-5'-monophosphate (dTMP) while utilizing 5,10-methylenetetrahydrofolate (mTHF) as the methyl donor, and NAD(P)H and FADH(2) as the reductant. This chain is Flavin-dependent thymidylate synthase, found in Helicobacter pylori (strain ATCC 700392 / 26695) (Campylobacter pylori).